The chain runs to 183 residues: Peptide deformylase (183 aa).

Fe cation-binding residues include cysteine 110 and histidine 153. The active site involves glutamate 154. Histidine 157 contributes to the Fe cation binding site.

Belongs to the polypeptide deformylase family. Fe(2+) serves as cofactor.

The enzyme catalyses N-terminal N-formyl-L-methionyl-[peptide] + H2O = N-terminal L-methionyl-[peptide] + formate. In terms of biological role, removes the formyl group from the N-terminal Met of newly synthesized proteins. Requires at least a dipeptide for an efficient rate of reaction. N-terminal L-methionine is a prerequisite for activity but the enzyme has broad specificity at other positions. This Listeria welshimeri serovar 6b (strain ATCC 35897 / DSM 20650 / CCUG 15529 / CIP 8149 / NCTC 11857 / SLCC 5334 / V8) protein is Peptide deformylase.